We begin with the raw amino-acid sequence, 81 residues long: MRKLALVPIRFYRYAISPLMASHCRFYPSCSCYAYEAIENHGLLRGGWLTFRRLGRCHPWNPGGYDPVPPIPTSRSSSMAE.

A disordered region spans residues 61-81 (NPGGYDPVPPIPTSRSSSMAE).

This sequence belongs to the UPF0161 family.

The protein resides in the cell inner membrane. Could be involved in insertion of integral membrane proteins into the membrane. This Pseudomonas fluorescens (strain Pf0-1) protein is Putative membrane protein insertion efficiency factor.